The following is a 376-amino-acid chain: UDP-N-acetylglucosamine--N-acetylmuramyl-(pentapeptide) pyrophosphoryl-undecaprenol N-acetylglucosamine transferase (376 aa).

UDP-N-acetyl-alpha-D-glucosamine-binding positions include 14-16 (TGG), N128, R169, S201, I256, and Q301.

Belongs to the glycosyltransferase 28 family. MurG subfamily.

Its subcellular location is the cell inner membrane. It carries out the reaction di-trans,octa-cis-undecaprenyl diphospho-N-acetyl-alpha-D-muramoyl-L-alanyl-D-glutamyl-meso-2,6-diaminopimeloyl-D-alanyl-D-alanine + UDP-N-acetyl-alpha-D-glucosamine = di-trans,octa-cis-undecaprenyl diphospho-[N-acetyl-alpha-D-glucosaminyl-(1-&gt;4)]-N-acetyl-alpha-D-muramoyl-L-alanyl-D-glutamyl-meso-2,6-diaminopimeloyl-D-alanyl-D-alanine + UDP + H(+). The protein operates within cell wall biogenesis; peptidoglycan biosynthesis. In terms of biological role, cell wall formation. Catalyzes the transfer of a GlcNAc subunit on undecaprenyl-pyrophosphoryl-MurNAc-pentapeptide (lipid intermediate I) to form undecaprenyl-pyrophosphoryl-MurNAc-(pentapeptide)GlcNAc (lipid intermediate II). This Phocaeicola vulgatus (strain ATCC 8482 / DSM 1447 / JCM 5826 / CCUG 4940 / NBRC 14291 / NCTC 11154) (Bacteroides vulgatus) protein is UDP-N-acetylglucosamine--N-acetylmuramyl-(pentapeptide) pyrophosphoryl-undecaprenol N-acetylglucosamine transferase.